We begin with the raw amino-acid sequence, 94 residues long: MPDIRVEVVYALSERQYLRTVSLVVGSTVEDAIKASGLLELRPDIDLEKNKVGIYSRPVKLGDKLNDGDRVEIYRPLIADPKELRRQRAEQAKK.

Belongs to the UPF0125 (RnfH) family.

The protein is Protein RnfH of Yersinia pestis bv. Antiqua (strain Antiqua).